The following is a 164-amino-acid chain: NADH-quinone oxidoreductase subunit I 2 (164 aa).

2 consecutive 4Fe-4S ferredoxin-type domains span residues 39 to 71 and 81 to 110; these read IVLT…VVKA and ESFR…LTPD. [4Fe-4S] cluster is bound by residues Cys51, Cys54, Cys57, Cys61, Cys90, Cys93, Cys96, and Cys100.

The protein belongs to the complex I 23 kDa subunit family. As to quaternary structure, NDH-1 is composed of 14 different subunits. Subunits NuoA, H, J, K, L, M, N constitute the membrane sector of the complex. [4Fe-4S] cluster serves as cofactor.

It is found in the cell inner membrane. The enzyme catalyses a quinone + NADH + 5 H(+)(in) = a quinol + NAD(+) + 4 H(+)(out). Functionally, NDH-1 shuttles electrons from NADH, via FMN and iron-sulfur (Fe-S) centers, to quinones in the respiratory chain. The immediate electron acceptor for the enzyme in this species is believed to be ubiquinone. Couples the redox reaction to proton translocation (for every two electrons transferred, four hydrogen ions are translocated across the cytoplasmic membrane), and thus conserves the redox energy in a proton gradient. The polypeptide is NADH-quinone oxidoreductase subunit I 2 (Cereibacter sphaeroides (strain ATCC 17023 / DSM 158 / JCM 6121 / CCUG 31486 / LMG 2827 / NBRC 12203 / NCIMB 8253 / ATH 2.4.1.) (Rhodobacter sphaeroides)).